Here is an 856-residue protein sequence, read N- to C-terminus: MHTFENHTPMMKQYLKIKAENPDVLLFYRMGDFYELFYDDAKKAAELLDISLTKRGQSAGQPVPMAGVPYHAIEGYLAKLVHLGESVAICEQVGEPVIAKGPVERQVVRIVTPGTVSDEALLPEKQDNLIATIYQEKTQFGLAVLDMTSGCFQISELQDAASLQAELQRIQPVELLYSEALEDKHLIEQFKGLRRRPLWEFELSTAIQLLNRQFGTKDLRGFGVEKAVLGLCAAGCLLQYAKETQRTALPHIQSISLLQNSDTVQIDASTRRNLELTQNLAGGTENTLAAILDKCVTPMGSRLLKRWIHQPIRNIEKLQCRQQHIQMLLQQNLVEELQPLLRQVGDMERILARVALRSARPRDLTRLRTALEQIPFIQHQLTKIPHFVAFSQQIADFSVQLALLQRAIIDNPPLLIRDGGVIAEGYNEELDEWRSLSEGATRYLKDLEQRERANTGIDTLKIGFNAVHGYYIQISQGQAHKAPLHYVRRQTLKNAERYIIPELKTYEEKVLKAKGASLALEKQLYDEIFDQLLPHLGDLQLASLTLAELDVLTNLAERAETLNYVQPQFSTQIGLQIMQGRHPVVEQVLKDPFIANPVELNQKRHLLIITGPNMGGKSTYMRQTALITLMAYIGSFVPAESAVIGPIDRIFTRIGASDDLASGRSTFMVEMTEMANILHQATEQSLVLIDEIGRGTSTYDGLSLAWACAEQLAQKIRSLTLFATHYFELTVLPEKIDGIHNVHLDAIEHNDNIAFMHSIQEGAASKSYGLAVAALAGVPQNVIKSAKQKLKQLETLSQQNSCQSQSVLTQVQGELTLMEEEENTSAVIETLKTLDPNELSPKQALECLYQLKKMLN.

611-618 (GPNMGGKS) provides a ligand contact to ATP.

This sequence belongs to the DNA mismatch repair MutS family.

Its function is as follows. This protein is involved in the repair of mismatches in DNA. It is possible that it carries out the mismatch recognition step. This protein has a weak ATPase activity. The sequence is that of DNA mismatch repair protein MutS from Histophilus somni (strain 129Pt) (Haemophilus somnus).